Consider the following 874-residue polypeptide: Probable inorganic carbon transporter subunit DabA (874 aa).

Positions 398, 400, 580, and 595 each coordinate Zn(2+).

It belongs to the inorganic carbon transporter (TC 9.A.2) DabA family. As to quaternary structure, forms a complex with DabB. The cofactor is Zn(2+).

The protein localises to the cell membrane. In terms of biological role, part of an energy-coupled inorganic carbon pump. The chain is Probable inorganic carbon transporter subunit DabA from Bacillus cereus (strain ATCC 10987 / NRS 248).